Reading from the N-terminus, the 232-residue chain is Aspartate/glutamate leucyltransferase (232 aa).

The protein belongs to the R-transferase family. Bpt subfamily.

It is found in the cytoplasm. It carries out the reaction N-terminal L-glutamyl-[protein] + L-leucyl-tRNA(Leu) = N-terminal L-leucyl-L-glutamyl-[protein] + tRNA(Leu) + H(+). The enzyme catalyses N-terminal L-aspartyl-[protein] + L-leucyl-tRNA(Leu) = N-terminal L-leucyl-L-aspartyl-[protein] + tRNA(Leu) + H(+). In terms of biological role, functions in the N-end rule pathway of protein degradation where it conjugates Leu from its aminoacyl-tRNA to the N-termini of proteins containing an N-terminal aspartate or glutamate. This Vibrio vulnificus (strain YJ016) protein is Aspartate/glutamate leucyltransferase.